We begin with the raw amino-acid sequence, 507 residues long: ATP synthase subunit alpha, chloroplastic (507 aa).

170 to 177 (GDRQTGKT) is an ATP binding site.

This sequence belongs to the ATPase alpha/beta chains family. As to quaternary structure, F-type ATPases have 2 components, CF(1) - the catalytic core - and CF(0) - the membrane proton channel. CF(1) has five subunits: alpha(3), beta(3), gamma(1), delta(1), epsilon(1). CF(0) has four main subunits: a, b, b' and c.

Its subcellular location is the plastid. It is found in the chloroplast thylakoid membrane. It carries out the reaction ATP + H2O + 4 H(+)(in) = ADP + phosphate + 5 H(+)(out). In terms of biological role, produces ATP from ADP in the presence of a proton gradient across the membrane. The alpha chain is a regulatory subunit. The protein is ATP synthase subunit alpha, chloroplastic of Nandina domestica (Heavenly bamboo).